A 490-amino-acid chain; its full sequence is ATP synthase subunit beta, chloroplastic (490 aa).

Gly-170 to Thr-177 contributes to the ATP binding site.

It belongs to the ATPase alpha/beta chains family. In terms of assembly, F-type ATPases have 2 components, CF(1) - the catalytic core - and CF(0) - the membrane proton channel. CF(1) has five subunits: alpha(3), beta(3), gamma(1), delta(1), epsilon(1). CF(0) has four main subunits: a(1), b(1), b'(1) and c(9-12).

It is found in the plastid. Its subcellular location is the chloroplast thylakoid membrane. It catalyses the reaction ATP + H2O + 4 H(+)(in) = ADP + phosphate + 5 H(+)(out). In terms of biological role, produces ATP from ADP in the presence of a proton gradient across the membrane. The catalytic sites are hosted primarily by the beta subunits. The sequence is that of ATP synthase subunit beta, chloroplastic from Pinus koraiensis (Korean pine).